The sequence spans 451 residues: Phosphoglucosamine mutase (451 aa).

S103 (phosphoserine intermediate) is an active-site residue. Mg(2+)-binding residues include S103, D243, D245, and D247. At S103 the chain carries Phosphoserine.

It belongs to the phosphohexose mutase family. The cofactor is Mg(2+). In terms of processing, activated by phosphorylation.

The enzyme catalyses alpha-D-glucosamine 1-phosphate = D-glucosamine 6-phosphate. Catalyzes the conversion of glucosamine-6-phosphate to glucosamine-1-phosphate. The polypeptide is Phosphoglucosamine mutase (Lactobacillus johnsonii (strain CNCM I-12250 / La1 / NCC 533)).